The primary structure comprises 237 residues: GCN5-related N-acetyltransferase 3, chloroplastic (237 aa).

The N-terminal 93 residues, 1-93 (MGLVGCVGKS…RAISRSDVIV (93 aa)), are a transit peptide targeting the chloroplast. In terms of domain architecture, N-acetyltransferase spans 94–237 (SVFCKPQHVD…TMMFTKSLEA (144 aa)). Residues 171–173 (LMV), 179–184 (RMGIGK), 207–209 (FED), and F214 contribute to the acetyl-CoA site.

Belongs to the acetyltransferase family. GNAT subfamily. Oligomer. Post-translationally, autoacetylated. As to expression, expressed in green tissues.

It is found in the plastid. The protein localises to the chloroplast. The catalysed reaction is an N-terminal L-alpha-aminoacyl-[protein] + acetyl-CoA = N-terminal N(alpha)-acetyl-L-alpha-aminoacyl-[protein] + CoA + H(+). It carries out the reaction L-lysyl-[protein] + acetyl-CoA = N(6)-acetyl-L-lysyl-[protein] + CoA + H(+). Functionally, protein acetyltransferase with dual specificity triggering both N-alpha-acetylation (NTA) and epsilon-lysine acetylation (KA), possibly with a low efficiency or toward specific plastid substrates. In Arabidopsis thaliana (Mouse-ear cress), this protein is GCN5-related N-acetyltransferase 3, chloroplastic.